Reading from the N-terminus, the 359-residue chain is tRNA/tmRNA (uracil-C(5))-methyltransferase (359 aa).

S-adenosyl-L-methionine-binding residues include glutamine 183, tyrosine 211, asparagine 216, glutamate 232, and aspartate 292. The active-site Nucleophile is the cysteine 317. Residue glutamate 351 is the Proton acceptor of the active site.

Belongs to the class I-like SAM-binding methyltransferase superfamily. RNA M5U methyltransferase family. TrmA subfamily.

The catalysed reaction is uridine(54) in tRNA + S-adenosyl-L-methionine = 5-methyluridine(54) in tRNA + S-adenosyl-L-homocysteine + H(+). It catalyses the reaction uridine(341) in tmRNA + S-adenosyl-L-methionine = 5-methyluridine(341) in tmRNA + S-adenosyl-L-homocysteine + H(+). Its function is as follows. Dual-specificity methyltransferase that catalyzes the formation of 5-methyluridine at position 54 (m5U54) in all tRNAs, and that of position 341 (m5U341) in tmRNA (transfer-mRNA). The protein is tRNA/tmRNA (uracil-C(5))-methyltransferase of Pseudomonas fluorescens (strain ATCC BAA-477 / NRRL B-23932 / Pf-5).